The primary structure comprises 246 residues: Serine protease 1 (246 aa).

The N-terminal stretch at 1 to 17 (MKTFIFLALLGAAVAFP) is a signal peptide. Residues 18–23 (VDDDDK) constitute a propeptide, activation peptide. Residues 24 to 244 (IVGGYTCGAN…YVSWIKQTIA (221 aa)) form the Peptidase S1 domain. 6 cysteine pairs are disulfide-bonded: Cys-30–Cys-160, Cys-48–Cys-64, Cys-132–Cys-233, Cys-139–Cys-206, Cys-171–Cys-185, and Cys-196–Cys-220. His-63 functions as the Charge relay system in the catalytic mechanism. Glu-75, Asn-77, Val-80, and Glu-85 together coordinate Ca(2+). The active-site Charge relay system is the Asp-107. Residues 194-195 (DS), 197-198 (QG), and Ser-200 each bind substrate. Ser-200 acts as the Charge relay system in catalysis.

This sequence belongs to the peptidase S1 family. As to quaternary structure, interacts with SERPINA1. Requires Ca(2+) as cofactor. In terms of processing, autocatalytic cleavage after Lys-23 leads to beta-trypsin by releasing a terminal hexapeptide. Subsequent cleavage after Lys-148 leads to alpha-trypsin. Further cleavage after Lys-193 yields pseudotrypsin. A cleavage may also occur after Arg-122. Post-translationally, not sulfated on tyrosine residue(s). Synthesized in the acinar cells of the pancreas.

The protein localises to the secreted. It localises to the extracellular space. The enzyme catalyses Preferential cleavage: Arg-|-Xaa, Lys-|-Xaa.. Its activity is regulated as follows. Is inhibited by scorpion cyclotide trypsin inhibitor TopI1. The sequence is that of Serine protease 1 (PRSS1) from Bos taurus (Bovine).